Consider the following 838-residue polypeptide: Polyribonucleotide nucleotidyltransferase (838 aa).

Residues aspartate 494 and aspartate 500 each contribute to the Mg(2+) site. The KH domain occupies 561–620 (PRMESMLIDKGKIKNVIGAGGKNVREICEKTGAKIEISQDGTVMIYAVGREAIESAKDMI). In terms of domain architecture, S1 motif spans 630 to 697 (GKIYSGEVCE…DKDHIQLSMR (68 aa)). Over residues 747-757 (GGASAGRNGRG) the composition is skewed to gly residues. Residues 747-838 (GGASAGRNGR…PAAPKKPRFF (92 aa)) form a disordered region. The span at 788 to 810 (AGSSGYSSDSSSGNTKSSSSESS) shows a compositional bias: low complexity. The segment covering 811–820 (GGTGGRGRNG) has biased composition (gly residues).

The protein belongs to the polyribonucleotide nucleotidyltransferase family. The cofactor is Mg(2+).

The protein localises to the cytoplasm. The enzyme catalyses RNA(n+1) + phosphate = RNA(n) + a ribonucleoside 5'-diphosphate. In terms of biological role, involved in mRNA degradation. Catalyzes the phosphorolysis of single-stranded polyribonucleotides processively in the 3'- to 5'-direction. In Anaplasma phagocytophilum (strain HZ), this protein is Polyribonucleotide nucleotidyltransferase.